Consider the following 863-residue polypeptide: Cilia- and flagella-associated protein 58 (863 aa).

Coiled-coil stretches lie at residues 107-600 and 631-815; these read TVKE…NERD and QSQY…KQVF. A disordered region spans residues 836–863; that stretch reads GPSLLDQLPGGSGTGSGGMATGGGVGMS. Positions 845 to 863 are enriched in gly residues; that stretch reads GGSGTGSGGMATGGGVGMS.

It belongs to the CFAP58 family.

It localises to the cell projection. The protein localises to the cilium. The protein resides in the flagellum. This Chlamydomonas reinhardtii (Chlamydomonas smithii) protein is Cilia- and flagella-associated protein 58.